A 1070-amino-acid chain; its full sequence is DNA-directed RNA polymerase subunit beta (1070 aa).

The protein belongs to the RNA polymerase beta chain family. In plastids the minimal PEP RNA polymerase catalytic core is composed of four subunits: alpha, beta, beta', and beta''. When a (nuclear-encoded) sigma factor is associated with the core the holoenzyme is formed, which can initiate transcription.

It is found in the plastid. Its subcellular location is the chloroplast. It carries out the reaction RNA(n) + a ribonucleoside 5'-triphosphate = RNA(n+1) + diphosphate. In terms of biological role, DNA-dependent RNA polymerase catalyzes the transcription of DNA into RNA using the four ribonucleoside triphosphates as substrates. The sequence is that of DNA-directed RNA polymerase subunit beta from Angiopteris evecta (Mule's foot fern).